The primary structure comprises 303 residues: Succinate--CoA ligase [ADP-forming] subunit alpha (303 aa).

CoA is bound by residues 20 to 23, K46, and 108 to 110; these read TGSE and ITE. Y173 contributes to the substrate binding site. Residue H259 is the Tele-phosphohistidine intermediate of the active site.

Belongs to the succinate/malate CoA ligase alpha subunit family. As to quaternary structure, heterotetramer of two alpha and two beta subunits.

The enzyme catalyses succinate + ATP + CoA = succinyl-CoA + ADP + phosphate. It carries out the reaction GTP + succinate + CoA = succinyl-CoA + GDP + phosphate. It functions in the pathway carbohydrate metabolism; tricarboxylic acid cycle; succinate from succinyl-CoA (ligase route): step 1/1. Succinyl-CoA synthetase functions in the citric acid cycle (TCA), coupling the hydrolysis of succinyl-CoA to the synthesis of either ATP or GTP and thus represents the only step of substrate-level phosphorylation in the TCA. The alpha subunit of the enzyme binds the substrates coenzyme A and phosphate, while succinate binding and nucleotide specificity is provided by the beta subunit. The chain is Succinate--CoA ligase [ADP-forming] subunit alpha from Mycobacterium bovis (strain ATCC BAA-935 / AF2122/97).